The chain runs to 179 residues: Natural killer cells antigen CD94 (179 aa).

Residues 1–10 (MAVSRITRWR) lie on the Cytoplasmic side of the membrane. The helical; Signal-anchor for type II membrane protein transmembrane segment at 11-31 (LMSMFFGIKCLFLIVALGVLV) threads the bilayer. Topologically, residues 32–179 (KNSFTIQNIQ…NRFICKQLPT (148 aa)) are extracellular. 4 disulfides stabilise this stretch: Cys-58/Cys-70, Cys-61/Cys-72, Cys-89/Cys-174, and Cys-152/Cys-166. Positions 68–175 (HQCSCYFISK…CENKNRFICK (108 aa)) constitute a C-type lectin domain. The N-linked (GlcNAc...) asparagine glycan is linked to Asn-93.

In terms of assembly, can form disulfide-bonded heterodimer with NKG2 family members KLRC1 and KLRC2. KLRD1-KLRC1 heterodimer interacts with peptide-bound MHC-E-B2M heterotrimeric complex. KLRD1 plays a prominent role in directly interacting with MHC-E. KLRD1-KLRC1 interacts with much higher affinity with peptide-bound MHC-E-B2M than KLRD1-KLRC2. Interacts with the adapter protein TYROBP/DAP12; this interaction is required for cell surface expression and cell activation.

Its subcellular location is the cell membrane. In terms of biological role, immune receptor involved in self-nonself discrimination. In complex with KLRC1 or KLRC2 on cytotoxic and regulatory lymphocyte subsets, recognizes non-classical major histocompatibility (MHC) class Ib molecule MHC-E loaded with self-peptides derived from the signal sequence of classical MHC class Ia and non-classical MHC class Ib molecules. Enables cytotoxic cells to monitor the expression of MHC class I molecules in healthy cells and to tolerate self. Primarily functions as a ligand binding subunit as it lacks the capacity to signal. Its function is as follows. KLRD1-KLRC1 acts as an immune inhibitory receptor. Key inhibitory receptor on natural killer (NK) cells that regulates their activation and effector functions. Dominantly counteracts T cell receptor signaling on a subset of memory/effector CD8-positive T cells as part of an antigen-driven response to avoid autoimmunity. On intraepithelial CD8-positive gamma-delta regulatory T cells triggers TGFB1 secretion, which in turn limits the cytotoxic programming of intraepithelial CD8-positive alpha-beta T cells, distinguishing harmless from pathogenic antigens. In MHC-E-rich tumor microenvironment, acts as an immune inhibitory checkpoint and may contribute to progressive loss of effector functions of NK cells and tumor-specific T cells, a state known as cell exhaustion. Upon MHC-E-peptide binding, transmits intracellular signals through KLRC1 immunoreceptor tyrosine-based inhibition motifs (ITIMs) by recruiting INPP5D/SHIP-1 and INPPL1/SHIP-2 tyrosine phosphatases to ITIMs, and ultimately opposing signals transmitted by activating receptors through dephosphorylation of proximal signaling molecules. KLRD1-KLRC2 acts as an immune activating receptor. On cytotoxic lymphocyte subsets recognizes MHC-E loaded with signal sequence-derived peptides from non-classical MHC class Ib MHC-G molecules, likely playing a role in the generation and effector functions of adaptive NK cells and in maternal-fetal tolerance during pregnancy. Regulates the effector functions of terminally differentiated cytotoxic lymphocyte subsets, and in particular may play a role in adaptive NK cell response to viral infection. Upon MHC-E-peptide binding, transmits intracellular signals via the adapter protein TYROBP/DAP12, triggering the phosphorylation of proximal signaling molecules and cell activation. This is Natural killer cells antigen CD94 (Klrd1) from Rattus norvegicus (Rat).